Reading from the N-terminus, the 221-residue chain is Transcription factor otaR1 (221 aa).

The segment at 109 to 146 (ASRSRPAFSTPASRPGLSSAKSPSLGATSPGSMDRSEE) is disordered. The segment covering 127–139 (SAKSPSLGATSPG) has biased composition (polar residues). A basic motif region spans residues 152–192 (KKYHEKYKERNRLAAGRSRQKQADLINLLQAEQQEEERRRK). The bZIP domain maps to 152–215 (KKYHEKYKER…VDMKQELQHH (64 aa)). The tract at residues 198 to 212 (IANMQKELVDMKQEL) is leucine-zipper.

It is found in the nucleus. In terms of biological role, transcription factor; part of the gene cluster that mediates the biosynthesis of ochratoxin A (OTA), a mycotoxin demonstrated to have nephrotoxic, immunotoxic, genotoxic, neurotoxic, and teratogenic properties. Positively regulates the expression of the OTA biosynthetic genes and subsequent production of OTA. Probably binds to conserved 5'-ACGT-3' bZIP binding motifs found in multiple copies (3 to 4) in the promoters of the OTA biosynthetic genes. Acts not only as a pathway-specific regulator of the OTA cluster but also binds at other chromosomal positions outside the OTA cluster and can act as a broad regulator. Negatively regulates pathogenicity and plays a critical role in tolerance to reactive oxygen species (ROS). The protein is Transcription factor otaR1 of Aspergillus niger (strain ATCC MYA-4892 / CBS 513.88 / FGSC A1513).